The sequence spans 86 residues: Haditoxin (86 aa).

An N-terminal signal peptide occupies residues 1-21 (MKTLLLTLVVVTIVYLDLGYT). 4 cysteine pairs are disulfide-bonded: C24–C45, C38–C62, C66–C78, and C79–C84.

Belongs to the three-finger toxin family. Short-chain subfamily. Orphan group VIII (haditoxin) sub-subfamily. As to quaternary structure, homodimer; non-covalently linked. As to expression, expressed by the venom gland.

The protein resides in the secreted. Antagonist of muscle (alpha-1-beta-1-delta-epsilon/CHRNA1-CHRNB1-CHRND-CHRNE) and neuronal (alpha-7/CHRNA7, alpha-3-beta-2/CHRNA3-CHRNB2, alpha-4-beta-2/CHRNA4-CHRNB2) nicotinic acetylcholine receptors (nAChR). The highest affinity is for human alpha-7/CHRNA7 nAChRs (IC(50)=180 nM), compared to human alpha-1-beta-1-delta-epsilon/CHRNA1-CHRNB1-CHRND-CHRNE nAChR (IC(50)= 550 nM), alpha-3-beta-2/CHRNA3-CHRNB2 nAChR (IC(50)=500 nM), and alpha-4-beta-2/CHRNA4-CHRNB2 nAChR (IC(50)=2.6 uM). The protein is Haditoxin of Ophiophagus hannah (King cobra).